A 354-amino-acid polypeptide reads, in one-letter code: Selenide, water dikinase (354 aa).

C23 is an active-site residue. Residues K26 and 54–56 (TSD) contribute to the ATP site. Residue D57 coordinates Mg(2+). Residues D74, D97, and 145-147 (GHS) each bind ATP. D97 is a Mg(2+) binding site. D233 contacts Mg(2+).

It belongs to the selenophosphate synthase 1 family. Class I subfamily. In terms of assembly, homodimer. It depends on Mg(2+) as a cofactor.

It carries out the reaction hydrogenselenide + ATP + H2O = selenophosphate + AMP + phosphate + 2 H(+). Synthesizes selenophosphate from selenide and ATP. The protein is Selenide, water dikinase of Burkholderia pseudomallei (strain K96243).